The sequence spans 537 residues: Copine-1 (537 aa).

2 consecutive C2 domains span residues 1–114 and 123–245; these read MAHC…TLPL and GRGT…ECIH. 7 residues coordinate Ca(2+): aspartate 21, aspartate 27, aspartate 80, aspartate 82, aspartate 92, aspartate 153, and aspartate 159. An N6-acetyllysine modification is found at lysine 171. Aspartate 214, aspartate 216, and aspartate 222 together coordinate Ca(2+). Residues 285-505 form the VWFA domain; that stretch reads NFTVGVDFTG…ALAQTVLAEV (221 aa).

It belongs to the copine family. As to quaternary structure, homodimer; homodimerizes via its C2 domains. Interacts with p65/RELA (via N-terminus); this interaction induces proteolytic cleavage of p65/RELA subunit and inhibition of NF-kappa-B transcriptional activity. Interacts (via VWFA domain) with ACTB, CCDC22, MYCBP2, PPP5C, RDX and UBE2O. Requires Ca(2+) as cofactor. In terms of tissue distribution, expressed in liver, spleen, muscle, testis, adrenal (at protein level).

The protein localises to the nucleus. The protein resides in the cytoplasm. It localises to the cell membrane. Calcium-dependent phospholipid-binding protein that plays a role in calcium-mediated intracellular processes. Involved in the TNF-alpha receptor signaling pathway in a calcium-dependent manner. Exhibits calcium-dependent phospholipid binding properties. Plays a role in neuronal progenitor cell differentiation; induces neurite outgrowth via a AKT-dependent signaling cascade and calcium-independent manner. May recruit target proteins to the cell membrane in a calcium-dependent manner. May function in membrane trafficking. Involved in TNF-alpha-induced NF-kappa-B transcriptional repression by inducing endoprotease processing of the transcription factor NF-kappa-B p65/RELA subunit. Also induces endoprotease processing of NF-kappa-B p50/NFKB1, p52/NFKB2, RELB and REL. This Bos taurus (Bovine) protein is Copine-1.